We begin with the raw amino-acid sequence, 273 residues long: Undecaprenyl-diphosphatase (273 aa).

7 helical membrane-spanning segments follow: residues 48–68 (AANT…VVVF), 89–109 (LTLL…VLFE), 116–136 (LFST…MIVA), 152–172 (ITYK…WPGF), 193–213 (ADFT…LSLL), 222–242 (ADIP…LLAI), and 252–272 (IRLV…YFLY).

It belongs to the UppP family.

It localises to the cell membrane. It catalyses the reaction di-trans,octa-cis-undecaprenyl diphosphate + H2O = di-trans,octa-cis-undecaprenyl phosphate + phosphate + H(+). Functionally, catalyzes the dephosphorylation of undecaprenyl diphosphate (UPP). Confers resistance to bacitracin. The protein is Undecaprenyl-diphosphatase of Geobacillus thermodenitrificans (strain NG80-2).